Here is a 467-residue protein sequence, read N- to C-terminus: Methylenetetrahydrofolate--tRNA-(uracil-5-)-methyltransferase TrmFO (467 aa).

11 to 16 (GAGLAG) lines the FAD pocket.

The protein belongs to the MnmG family. TrmFO subfamily. The cofactor is FAD.

It localises to the cytoplasm. The catalysed reaction is uridine(54) in tRNA + (6R)-5,10-methylene-5,6,7,8-tetrahydrofolate + NADH + H(+) = 5-methyluridine(54) in tRNA + (6S)-5,6,7,8-tetrahydrofolate + NAD(+). It catalyses the reaction uridine(54) in tRNA + (6R)-5,10-methylene-5,6,7,8-tetrahydrofolate + NADPH + H(+) = 5-methyluridine(54) in tRNA + (6S)-5,6,7,8-tetrahydrofolate + NADP(+). Functionally, catalyzes the folate-dependent formation of 5-methyl-uridine at position 54 (M-5-U54) in all tRNAs. In Prochlorococcus marinus (strain NATL2A), this protein is Methylenetetrahydrofolate--tRNA-(uracil-5-)-methyltransferase TrmFO.